Consider the following 131-residue polypeptide: D-ribose pyranase (131 aa).

The active-site Proton donor is the H20. Substrate-binding positions include D28, H98, and 120 to 122 (YAN).

The protein belongs to the RbsD / FucU family. RbsD subfamily. Homodecamer.

The protein localises to the cytoplasm. It carries out the reaction beta-D-ribopyranose = beta-D-ribofuranose. It functions in the pathway carbohydrate metabolism; D-ribose degradation; D-ribose 5-phosphate from beta-D-ribopyranose: step 1/2. Its function is as follows. Catalyzes the interconversion of beta-pyran and beta-furan forms of D-ribose. In Clostridium perfringens (strain SM101 / Type A), this protein is D-ribose pyranase.